We begin with the raw amino-acid sequence, 306 residues long: MTHLIDLFKPMIPSLLNNLHKGQSGRIAIMGGSKEYTGAPFFSGISSLKIGSDICHIFAPTEGGTATALKTMSPDLIVHPIEKNDPSDIIPWLLSLHVIVVGPGLGRSSGAWSCASEVIKAARNINLPIVLDGDALRLICDNLDIIKGYDKAILTPNFVEFKSLSDSVKKMIGDTSNNLLKPEHIASCLGNITIVQKGKEDIITDGNQTVVCDDEGMPRRCGGQGDILAGTVGTMYAWSQLYYKYNSNTDDKPEYPISIISAYAACSLLRHCSKKAYQISKRSTVSMDIINQISNGFEDLFPESSK.

Residues 4 to 300 (LIDLFKPMIP…NQISNGFEDL (297 aa)) form the YjeF C-terminal domain. (6S)-NADPHX contacts are provided by residues Gly104 and 157–163 (NFVEFKS). ATP is bound by residues 197-201 (KGKED) and 216-225 (GMPRRCGGQG). Asp226 lines the (6S)-NADPHX pocket.

The protein belongs to the NnrD/CARKD family. It depends on Mg(2+) as a cofactor.

It catalyses the reaction (6S)-NADHX + ATP = ADP + phosphate + NADH + H(+). It carries out the reaction (6S)-NADPHX + ATP = ADP + phosphate + NADPH + H(+). In terms of biological role, catalyzes the dehydration of the S-form of NAD(P)HX at the expense of ATP, which is converted to ADP. Together with NAD(P)HX epimerase, which catalyzes the epimerization of the S- and R-forms, the enzyme allows the repair of both epimers of NAD(P)HX, a damaged form of NAD(P)H that is a result of enzymatic or heat-dependent hydration. The chain is ATP-dependent (S)-NAD(P)H-hydrate dehydratase from Dictyostelium discoideum (Social amoeba).